Consider the following 582-residue polypeptide: ABC transporter-like protein ECU11_1340 (582 aa).

Residues 15 to 257 form the ABC transporter domain; sequence VPNQNLSSNE…LGTKGIHNDG (243 aa). 47–54 contributes to the ATP binding site; sequence GTSGSGKT. In terms of domain architecture, ABC transmembrane type-2 spans 316 to 519; sequence YVSFQMAIRQ…EIDAFISNFF (204 aa). 6 helical membrane passes run 335 to 355, 359 to 378, 412 to 432, 436 to 456, 482 to 502, and 551 to 571; these read ILYSLAMPIAMALFLVTGKYI, FSIATIKASMLSLSLYYVMN, TLVSILKYCIFFGIIYAFGLI, HAFLGQVLMYTLGGTVSSMLF, GALLGAGALLGALTLWISVIP, and SFLRILFLMFHPFAFFHSSIL.

The protein belongs to the ABC transporter superfamily.

It is found in the membrane. The polypeptide is ABC transporter-like protein ECU11_1340 (Encephalitozoon cuniculi (strain GB-M1) (Microsporidian parasite)).